A 257-amino-acid polypeptide reads, in one-letter code: uncharacterized protein (257 aa).

The first 26 residues, 1 to 26 (MKKAFILSAAAAVGLFTFGGVQQASA), serve as a signal peptide directing secretion. Residues 80–135 (AKQSNVKVQDVQKTETAKPAQKTTEKAAADQNTASKAPATAEKTNTTTSAPSSVSA) are disordered. Over residues 121–134 (EKTNTTTSAPSSVS) the composition is skewed to polar residues. The SCP domain occupies 141–254 (VELTNAERQK…ESGSIWTQQF (114 aa)).

This is an uncharacterized protein from Bacillus subtilis (strain 168).